A 351-amino-acid chain; its full sequence is sn-glycerol-3-phosphate import ATP-binding protein UgpC (351 aa).

The ABC transporter domain maps to 4-234 (ITLDNLVKAY…PATTFVAGFI (231 aa)). ATP is bound at residue 36–43 (GPSGCGKS).

It belongs to the ABC transporter superfamily. sn-glycerol-3-phosphate importer (TC 3.A.1.1.3) family. In terms of assembly, the complex is composed of two ATP-binding proteins (UgpC), two transmembrane proteins (UgpA and UgpE) and a solute-binding protein (UgpB).

Its subcellular location is the cell inner membrane. It carries out the reaction sn-glycerol 3-phosphate(out) + ATP + H2O = sn-glycerol 3-phosphate(in) + ADP + phosphate + H(+). Functionally, part of the ABC transporter complex UgpBAEC involved in sn-glycerol-3-phosphate (G3P) import. Responsible for energy coupling to the transport system. In Ruegeria pomeroyi (strain ATCC 700808 / DSM 15171 / DSS-3) (Silicibacter pomeroyi), this protein is sn-glycerol-3-phosphate import ATP-binding protein UgpC.